Reading from the N-terminus, the 248-residue chain is Ubiquinone biosynthesis O-methyltransferase (248 aa).

Arg-41, Gly-72, Asp-93, and Met-136 together coordinate S-adenosyl-L-methionine.

The protein belongs to the methyltransferase superfamily. UbiG/COQ3 family.

The enzyme catalyses a 3-demethylubiquinol + S-adenosyl-L-methionine = a ubiquinol + S-adenosyl-L-homocysteine + H(+). The catalysed reaction is a 3-(all-trans-polyprenyl)benzene-1,2-diol + S-adenosyl-L-methionine = a 2-methoxy-6-(all-trans-polyprenyl)phenol + S-adenosyl-L-homocysteine + H(+). It participates in cofactor biosynthesis; ubiquinone biosynthesis. O-methyltransferase that catalyzes the 2 O-methylation steps in the ubiquinone biosynthetic pathway. The protein is Ubiquinone biosynthesis O-methyltransferase of Rhizobium etli (strain CIAT 652).